A 425-amino-acid polypeptide reads, in one-letter code: Trigger factor (425 aa).

In terms of domain architecture, PPIase FKBP-type spans 163–248 (GDTAVIDFEG…IHEIKTKELP (86 aa)).

It belongs to the FKBP-type PPIase family. Tig subfamily.

It localises to the cytoplasm. The catalysed reaction is [protein]-peptidylproline (omega=180) = [protein]-peptidylproline (omega=0). Functionally, involved in protein export. Acts as a chaperone by maintaining the newly synthesized protein in an open conformation. Functions as a peptidyl-prolyl cis-trans isomerase. This Bacillus mycoides (strain KBAB4) (Bacillus weihenstephanensis) protein is Trigger factor.